The chain runs to 745 residues: MSHFKYRNQTTDICNAAALDAFAMYSNYSVPLALLFALLLSFQTARALKAADEYAVSPDLIPGLSQAEDRALVPTMHAGHIPLDENNDEHTKNYFFWKFHDESGSASGPARDTLIFWLNGGPGCSSMDGALMESGALRIDSDGKAYLNRGGWHTRGDIVFVDQPAGTGFSTVASDNDYDNDLKVVSEHFVAFLRNYFQVFPDDAGKQVVFAGESYAGQFIPYFARAVLDQDEVQVNLQALLIGNGWIDPNQQSLYYIPFAVEKGLITQDDPSFSYLLKQQENCQNKINSKENDRFSFKECENILNNLLEVTRKIKDSEGKKVPSDQQCINMYDLRLKDSYPSCGMNWPQDLPNLGKFFGTEGVLEALHLDPEHVSQWHECDDKVSNYLKNPDSRASAAILPGLLEAGLEVMLFNGDQDIICNNMGVEAVISQMSWGGETGFSENVQLYDWVYRSPENSEITPAGFVKYDRNLTFMSVYNASHMVPFDNALVSRGVVDLFLNDVDLVQIDGRDTLITDDVNKGKDGDASETDDTTELDCEGKDKLSEECKQLNASKGQNGESDKDEGEKGNEEDDNDDTEDGKKDAGDEKDDGEKDDDEKDGDEKDGDEKDEEDDDDKDENEKDEEDDDKDGDKPEGKNNDGAEDEDDDHNSGSHLAVTMICLLVSGTIIGGLYFTFRDRFRPRLRAILVDPTNRSEASKKTVSWAADLEQDAADLSNPENGAKKKGPYTSVPTQESRDSFELDNL.

The N-terminal stretch at 1 to 47 (MSHFKYRNQTTDICNAAALDAFAMYSNYSVPLALLFALLLSFQTARA) is a signal peptide. The Lumenal segment spans residues 48–655 (LKAADEYAVS…DDDHNSGSHL (608 aa)). Catalysis depends on residues Ser214 and Asp418. 2 N-linked (GlcNAc...) asparagine glycosylation sites follow: Asn471 and Asn479. The active site involves His482. Residues 515–526 (ITDDVNKGKDGD) show a composition bias toward basic and acidic residues. The segment at 515 to 651 (ITDDVNKGKD…AEDEDDDHNS (137 aa)) is disordered. Over residues 527–537 (ASETDDTTELD) the composition is skewed to acidic residues. The segment covering 538-549 (CEGKDKLSEECK) has biased composition (basic and acidic residues). N-linked (GlcNAc...) asparagine glycosylation occurs at Asn552. 2 stretches are compositionally biased toward acidic residues: residues 570-579 (NEEDDNDDTE) and 587-629 (DEKD…DDDK). Over residues 630–640 (DGDKPEGKNND) the composition is skewed to basic and acidic residues. A helical transmembrane segment spans residues 656–676 (AVTMICLLVSGTIIGGLYFTF). The Cytoplasmic portion of the chain corresponds to 677-745 (RDRFRPRLRA…SRDSFELDNL (69 aa)). The tract at residues 709-745 (EQDAADLSNPENGAKKKGPYTSVPTQESRDSFELDNL) is disordered. The segment covering 735–745 (ESRDSFELDNL) has biased composition (basic and acidic residues).

This sequence belongs to the peptidase S10 family.

Its subcellular location is the golgi apparatus. The protein resides in the trans-Golgi network membrane. It carries out the reaction Preferential release of a C-terminal arginine or lysine residue.. Its function is as follows. Protease with a carboxypeptidase B-like function involved in the C-terminal processing of the lysine and arginine residues from protein precursors. Promotes cell fusion and is involved in the programmed cell death. This is Pheromone-processing carboxypeptidase KEX1 (KEX1) from Lachancea thermotolerans (strain ATCC 56472 / CBS 6340 / NRRL Y-8284) (Yeast).